Consider the following 326-residue polypeptide: Triacylglycerol lipase 2 (326 aa).

The short motif at 142-146 (AHSMG) is the (A/G)XSXG lipase motif element.

Interacts with MIA40; forms mixed disulfide intermediates with MIA40.

It localises to the mitochondrion. Its subcellular location is the mitochondrion intermembrane space. The enzyme catalyses a triacylglycerol + H2O = a diacylglycerol + a fatty acid + H(+). The catalysed reaction is 1,2,3-tri-(9Z-octadecenoyl)-glycerol + H2O = di-(9Z)-octadecenoylglycerol + (9Z)-octadecenoate + H(+). It carries out the reaction 1,2,3-tributanoylglycerol + H2O = dibutanoylglycerol + butanoate + H(+). It catalyses the reaction 1,2,3-trioctanoylglycerol + H2O = dioctanoylglycerol + octanoate + H(+). The enzyme catalyses di-(9Z)-octadecenoylglycerol + H2O = (9Z-octadecenoyl)-glycerol + (9Z)-octadecenoate + H(+). The catalysed reaction is dioctanoylglycerol + H2O = octanoylglycerol + octanoate + H(+). Mitochondrial triacylglycerol (TAG) lipase with activity toward long-chain diacylglycerols (DAGs) and triacylglycerols (TAGs). Involved in mitochondrial lipid metabolism. The polypeptide is Triacylglycerol lipase 2 (TGL2) (Saccharomyces cerevisiae (strain ATCC 204508 / S288c) (Baker's yeast)).